The sequence spans 464 residues: Flavin-containing monooxygenase FMO GS-OX-like 7 (464 aa).

18–23 is a binding site for FAD; that stretch reads GAGAAG. 214 to 219 serves as a coordination point for NADP(+); sequence GSSVSG.

This sequence belongs to the FMO family. FAD is required as a cofactor.

Catalyzes the conversion of methylthioalkyl glucosinolates of any chain length into methylsulfinylalkyl glucosinolates. This is Flavin-containing monooxygenase FMO GS-OX-like 7 from Arabidopsis thaliana (Mouse-ear cress).